A 141-amino-acid polypeptide reads, in one-letter code: MTKTAKVNDIVRDWVVLDAKDKVFGRLITEIAVLLRGKHRPFYTPNVDCGDFVVVINANKVKFSGMKLEDKEYFTHSGYFGSTKSKTLQEMLEKTPEKLYHLAVRGMLPKTKLGKAMIKKLKVYRDDKHPHTAQTSKKDAK.

Belongs to the universal ribosomal protein uL13 family. In terms of assembly, part of the 50S ribosomal subunit.

Its function is as follows. This protein is one of the early assembly proteins of the 50S ribosomal subunit, although it is not seen to bind rRNA by itself. It is important during the early stages of 50S assembly. The polypeptide is Large ribosomal subunit protein uL13 (Helicobacter pylori (strain G27)).